A 99-amino-acid polypeptide reads, in one-letter code: Small ribosomal subunit protein uS19c (99 aa).

It belongs to the universal ribosomal protein uS19 family.

The protein localises to the plastid. The protein resides in the chloroplast. In terms of biological role, protein S19 forms a complex with S13 that binds strongly to the 16S ribosomal RNA. This is Small ribosomal subunit protein uS19c from Oenothera biennis (German evening primrose).